The following is a 251-amino-acid chain: E3 ubiquitin-protein ligase MARCHF3 (251 aa).

The RING-CH-type zinc-finger motif lies at 61-121 (QSFNDRPMCR…ELCHFRFSVE (61 aa)). Zn(2+) contacts are provided by Cys-69, Cys-72, Cys-85, Cys-87, His-95, Cys-98, Cys-111, and Cys-114. 2 consecutive transmembrane segments (helical) span residues 143-163 (LFGD…SGWL) and 180-200 (AVGL…WTLV).

The protein localises to the cytoplasmic vesicle membrane. It localises to the early endosome membrane. The catalysed reaction is S-ubiquitinyl-[E2 ubiquitin-conjugating enzyme]-L-cysteine + [acceptor protein]-L-lysine = [E2 ubiquitin-conjugating enzyme]-L-cysteine + N(6)-ubiquitinyl-[acceptor protein]-L-lysine.. It functions in the pathway protein modification; protein ubiquitination. E3 ubiquitin-protein ligase which may be involved in endosomal trafficking. E3 ubiquitin ligases accept ubiquitin from an E2 ubiquitin-conjugating enzyme in the form of a thioester and then directly transfer the ubiquitin to targeted substrates. The sequence is that of E3 ubiquitin-protein ligase MARCHF3 (marchf3) from Xenopus tropicalis (Western clawed frog).